Here is a 503-residue protein sequence, read N- to C-terminus: Transcription termination/antitermination protein NusA (503 aa).

One can recognise an S1 motif domain in the interval 139 to 203 (GEIINGIVKR…KGPQIFLSRV (65 aa)). Residues 308-378 (RHKVEVVVSQ…LDVEEVIGQL (71 aa)) form the KH domain.

This sequence belongs to the NusA family. In terms of assembly, monomer. Binds directly to the core enzyme of the DNA-dependent RNA polymerase and to nascent RNA.

The protein resides in the cytoplasm. Functionally, participates in both transcription termination and antitermination. In Rickettsia conorii (strain ATCC VR-613 / Malish 7), this protein is Transcription termination/antitermination protein NusA.